A 255-amino-acid chain; its full sequence is MNDNNIQVLPEMSSVWQETLNWQPTVEQKQQFQKLYELIILGNKKLNLTRITKPEEFWEKHLWDSLRGIKFILENKIHWSEEKKVIDIGTGAGFPGLLVAIILPQYAVTLLDSTRKKISFIENILTDLNIKNALTITNRVEQIGRLFKYRETYDIGLLRAVASTVVCAEYALPLLKIGGIAILYRGNITTDEQANLPEVVKLLGGKIERIEEFKTPLSNSIRNCIYLRKVGKTPINYPRSVGVPNQKPLLSLKKI.

S-adenosyl-L-methionine is bound by residues G89, F94, 112–114, 140–141, and R159; these read DST and VE.

It belongs to the methyltransferase superfamily. RNA methyltransferase RsmG family.

It is found in the cytoplasm. Specifically methylates the N7 position of a guanine in 16S rRNA. The sequence is that of Ribosomal RNA small subunit methyltransferase G from Trichodesmium erythraeum (strain IMS101).